The following is a 55-amino-acid chain: Small ribosomal subunit protein bS21 (55 aa).

The protein belongs to the bacterial ribosomal protein bS21 family.

This Ureaplasma parvum serovar 3 (strain ATCC 27815 / 27 / NCTC 11736) protein is Small ribosomal subunit protein bS21.